The primary structure comprises 122 residues: Large ribosomal subunit protein uL14 (122 aa).

It belongs to the universal ribosomal protein uL14 family. As to quaternary structure, part of the 50S ribosomal subunit. Forms a cluster with proteins L3 and L19. In the 70S ribosome, L14 and L19 interact and together make contacts with the 16S rRNA in bridges B5 and B8.

In terms of biological role, binds to 23S rRNA. Forms part of two intersubunit bridges in the 70S ribosome. This Polaromonas naphthalenivorans (strain CJ2) protein is Large ribosomal subunit protein uL14.